Here is a 233-residue protein sequence, read N- to C-terminus: 7-cyano-7-deazaguanine synthase (233 aa).

Residue 17–27 participates in ATP binding; sequence LSGGLDSMVCA. Zn(2+) is bound by residues cysteine 196, cysteine 206, cysteine 209, and cysteine 212.

The protein belongs to the QueC family. The cofactor is Zn(2+).

It carries out the reaction 7-carboxy-7-deazaguanine + NH4(+) + ATP = 7-cyano-7-deazaguanine + ADP + phosphate + H2O + H(+). The protein operates within purine metabolism; 7-cyano-7-deazaguanine biosynthesis. Functionally, catalyzes the ATP-dependent conversion of 7-carboxy-7-deazaguanine (CDG) to 7-cyano-7-deazaguanine (preQ(0)). The polypeptide is 7-cyano-7-deazaguanine synthase (Novosphingobium aromaticivorans (strain ATCC 700278 / DSM 12444 / CCUG 56034 / CIP 105152 / NBRC 16084 / F199)).